We begin with the raw amino-acid sequence, 914 residues long: Trafficking kinesin-binding protein 2 (914 aa).

Over residues 1-21 the composition is skewed to polar residues; sequence MSQSQNAIFTSPTGEENLMNS. The disordered stretch occupies residues 1 to 30; the sequence is MSQSQNAIFTSPTGEENLMNSNHRDSESIT. The region spanning 48–353 is the HAP1 N-terminal domain; that stretch reads EEQLPQYRLK…QEEIKELRSR (306 aa). A coiled-coil region spans residues 134 to 354; the sequence is QALLKRNHVL…EEIKELRSRS (221 aa). Positions 359–509 are interaction with HGS; that stretch reads HLYFSQSYGA…KQFFAEEWQR (151 aa). Phosphoserine is present on Ser-420. Disordered stretches follow at residues 447 to 482 and 765 to 787; these read QQTEDKSLLNQGSSSEEVAGSSQKMGQPGPSGDSDL and QPLPKSLAIPSTPPNSPSHSPCP. Over residues 454 to 471 the composition is skewed to polar residues; that stretch reads LLNQGSSSEEVAGSSQKM. The segment covering 775–787 has biased composition (pro residues); the sequence is STPPNSPSHSPCP.

The protein belongs to the milton family. Interacts with GABA-A receptor and O-GlcNAc transferase. Interacts with HGS. Interacts with RHOT1/Miro-1 and RHOT2/Miro-2. In terms of processing, O-glycosylated. In terms of tissue distribution, widely expressed, with highest expression in heart.

It is found in the cytoplasm. The protein localises to the early endosome. It localises to the mitochondrion. Functionally, may regulate endosome-to-lysosome trafficking of membrane cargo, including EGFR. The polypeptide is Trafficking kinesin-binding protein 2 (TRAK2) (Homo sapiens (Human)).